Consider the following 488-residue polypeptide: Regulatory protein ViaA (488 aa).

This sequence belongs to the ViaA family. In terms of assembly, homodimer. Interacts with RavA.

It localises to the cytoplasm. Its function is as follows. Component of the RavA-ViaA chaperone complex, which may act on the membrane to optimize the function of some of the respiratory chains. ViaA stimulates the ATPase activity of RavA. This Yersinia enterocolitica serotype O:8 / biotype 1B (strain NCTC 13174 / 8081) protein is Regulatory protein ViaA.